The following is a 150-amino-acid chain: uncharacterized protein (150 aa).

The region spanning 5-66 (LDKVDRRLLE…KPNYKKLNLG (62 aa)) is the HTH asnC-type domain. Residues 24 to 43 (IATLSKKLGIPRTTVHYRIK) constitute a DNA-binding region (H-T-H motif).

This is an uncharacterized protein from Pyrococcus abyssi (strain GE5 / Orsay).